A 278-amino-acid chain; its full sequence is Cytoplasmic envelopment protein 1 (278 aa).

It belongs to the herpesviridae cytoplasmic envelopment protein 1 family. Interacts with BSRF1 tegument protein; the BBRF2-BSRF1 complexes oligomerize and might play a role in tethering the viral nucleocapsids to the host Golgi membrane during secondary envelopment.

The protein localises to the virion. It is found in the virion tegument. The protein resides in the host cytoplasm. It localises to the host Golgi apparatus. In terms of biological role, plays a critical role in cytoplasmic virus egress. Participates in the final step of tegumentation and envelope acquisition within the host cytoplasm. The polypeptide is Cytoplasmic envelopment protein 1 (Homo sapiens (Human)).